The following is a 629-amino-acid chain: 1-deoxy-D-xylulose-5-phosphate synthase (629 aa).

Thiamine diphosphate-binding positions include histidine 85 and 126–128; that span reads GHS. Position 157 (aspartate 157) interacts with Mg(2+). Residues 158–159, asparagine 186, tyrosine 293, and glutamate 373 each bind thiamine diphosphate; that span reads GS. Asparagine 186 lines the Mg(2+) pocket.

The protein belongs to the transketolase family. DXPS subfamily. In terms of assembly, homodimer. Mg(2+) is required as a cofactor. It depends on thiamine diphosphate as a cofactor.

It catalyses the reaction D-glyceraldehyde 3-phosphate + pyruvate + H(+) = 1-deoxy-D-xylulose 5-phosphate + CO2. Its pathway is metabolic intermediate biosynthesis; 1-deoxy-D-xylulose 5-phosphate biosynthesis; 1-deoxy-D-xylulose 5-phosphate from D-glyceraldehyde 3-phosphate and pyruvate: step 1/1. Its function is as follows. Catalyzes the acyloin condensation reaction between C atoms 2 and 3 of pyruvate and glyceraldehyde 3-phosphate to yield 1-deoxy-D-xylulose-5-phosphate (DXP). The polypeptide is 1-deoxy-D-xylulose-5-phosphate synthase (Helicobacter hepaticus (strain ATCC 51449 / 3B1)).